A 172-amino-acid polypeptide reads, in one-letter code: Myosin regulatory light chain (172 aa).

Threonine 17 is subject to Phosphothreonine. Phosphoserine is present on serine 18. EF-hand domains follow at residues 27–62 (AQIQ…LGKE), 98–133 (DPEE…MGER), and 134–168 (YSEE…GTKD). The Ca(2+) site is built by aspartate 40, asparagine 42, aspartate 44, and aspartate 51.

As to quaternary structure, myosin is a hexamer of 2 heavy chains and 4 light chains (two regulatory light chains and two essential light chains). May be phosphorylated by let-502 or/and pak-1 and dephosphorylated by mel-11 to regulate its activation and myosin II-mediated contraction. As to expression, expressed in the spermathecal and uterine walls. Weak expression in gonadal sheath and intestinal muscle. Not detected in vulval, pharyngeal or body wall muscles.

It localises to the cytoplasm. It is found in the cytoskeleton. Functionally, regulates myosin II activity and organization during embryo elongation. May be involved in the organization of mlc-5 into bundles. Required maternally for cytokinesis during meiosis and mitosis in the early embryo and for the establishment of embryonic anterior-posterior polarity. The chain is Myosin regulatory light chain from Caenorhabditis elegans.